Consider the following 274-residue polypeptide: Glutamate--cysteine ligase regulatory subunit (274 aa).

Phosphoserine is present on Ser-59. Position 263 is an N6-acetyllysine (Lys-263).

Belongs to the aldo/keto reductase family. Glutamate--cysteine ligase light chain subfamily. Heterodimer of a catalytic heavy chain and a regulatory light chain.

Its pathway is sulfur metabolism; glutathione biosynthesis; glutathione from L-cysteine and L-glutamate: step 1/2. This chain is Glutamate--cysteine ligase regulatory subunit (Gclm), found in Mus musculus (Mouse).